The sequence spans 160 residues: 6,7-dimethyl-8-ribityllumazine synthase (160 aa).

Residues Trp-28, 59–61 (SFE), and 82–84 (VII) each bind 5-amino-6-(D-ribitylamino)uracil. 87–88 (GT) lines the (2S)-2-hydroxy-3-oxobutyl phosphate pocket. The active-site Proton donor is the His-90. Phe-115 is a binding site for 5-amino-6-(D-ribitylamino)uracil. Arg-129 serves as a coordination point for (2S)-2-hydroxy-3-oxobutyl phosphate.

It belongs to the DMRL synthase family.

It catalyses the reaction (2S)-2-hydroxy-3-oxobutyl phosphate + 5-amino-6-(D-ribitylamino)uracil = 6,7-dimethyl-8-(1-D-ribityl)lumazine + phosphate + 2 H2O + H(+). Its pathway is cofactor biosynthesis; riboflavin biosynthesis; riboflavin from 2-hydroxy-3-oxobutyl phosphate and 5-amino-6-(D-ribitylamino)uracil: step 1/2. Its function is as follows. Catalyzes the formation of 6,7-dimethyl-8-ribityllumazine by condensation of 5-amino-6-(D-ribitylamino)uracil with 3,4-dihydroxy-2-butanone 4-phosphate. This is the penultimate step in the biosynthesis of riboflavin. In Clavibacter michiganensis subsp. michiganensis (strain NCPPB 382), this protein is 6,7-dimethyl-8-ribityllumazine synthase.